Here is a 360-residue protein sequence, read N- to C-terminus: uncharacterized protein (360 aa).

Positions 45 to 148 (EDIEDKILQI…KNKTYVSITP (104 aa)) constitute a THUMP domain.

This is an uncharacterized protein from Methanocaldococcus jannaschii (strain ATCC 43067 / DSM 2661 / JAL-1 / JCM 10045 / NBRC 100440) (Methanococcus jannaschii).